The following is a 389-amino-acid chain: Succinate--CoA ligase [ADP-forming] subunit beta (389 aa).

ATP is bound by residues K46, 53–55 (GRG), E99, C102, and E107. N199 and D213 together coordinate Mg(2+). Substrate is bound by residues N264 and 321-323 (GIV).

The protein belongs to the succinate/malate CoA ligase beta subunit family. Heterotetramer of two alpha and two beta subunits. Mg(2+) is required as a cofactor.

It catalyses the reaction succinate + ATP + CoA = succinyl-CoA + ADP + phosphate. The catalysed reaction is GTP + succinate + CoA = succinyl-CoA + GDP + phosphate. Its pathway is carbohydrate metabolism; tricarboxylic acid cycle; succinate from succinyl-CoA (ligase route): step 1/1. In terms of biological role, succinyl-CoA synthetase functions in the citric acid cycle (TCA), coupling the hydrolysis of succinyl-CoA to the synthesis of either ATP or GTP and thus represents the only step of substrate-level phosphorylation in the TCA. The beta subunit provides nucleotide specificity of the enzyme and binds the substrate succinate, while the binding sites for coenzyme A and phosphate are found in the alpha subunit. The protein is Succinate--CoA ligase [ADP-forming] subunit beta of Haemophilus influenzae (strain PittEE).